Consider the following 187-residue polypeptide: Ribosome-recycling factor (187 aa).

It belongs to the RRF family.

Its subcellular location is the cytoplasm. Its function is as follows. Responsible for the release of ribosomes from messenger RNA at the termination of protein biosynthesis. May increase the efficiency of translation by recycling ribosomes from one round of translation to another. The protein is Ribosome-recycling factor of Methylorubrum extorquens (strain CM4 / NCIMB 13688) (Methylobacterium extorquens).